The chain runs to 88 residues: Small ribosomal subunit protein uS15 (88 aa).

It belongs to the universal ribosomal protein uS15 family. In terms of assembly, part of the 30S ribosomal subunit. Forms a bridge to the 50S subunit in the 70S ribosome, contacting the 23S rRNA.

In terms of biological role, one of the primary rRNA binding proteins, it binds directly to 16S rRNA where it helps nucleate assembly of the platform of the 30S subunit by binding and bridging several RNA helices of the 16S rRNA. Its function is as follows. Forms an intersubunit bridge (bridge B4) with the 23S rRNA of the 50S subunit in the ribosome. This chain is Small ribosomal subunit protein uS15, found in Albidiferax ferrireducens (strain ATCC BAA-621 / DSM 15236 / T118) (Rhodoferax ferrireducens).